The sequence spans 250 residues: Bcl-2-like protein 12 (250 aa).

The interval 24–46 is disordered; that stretch reads GEAAGSPVPTPPRSPAQEEPTDF. The residue at position 29 (Ser-29) is a Phosphoserine. A Phosphothreonine modification is found at Thr-33. Ser-37 is modified (phosphoserine). Arg-60 carries the post-translational modification Omega-N-methylarginine. Phosphoserine occurs at positions 111, 158, 159, 161, and 189. Residues 227–238 carry the BH2 motif; the sequence is WIQAHGGWEGIL.

This sequence belongs to the Bcl-2 family. Expressed mainly in breast, thymus, prostate, fetal liver, colon, placenta, pancreas, small intestine, spinal cord, kidney, and bone marrow and to a lesser extent in many other tissues. Isoform 2 is primarily expressed in skeletal muscle.

In Homo sapiens (Human), this protein is Bcl-2-like protein 12.